The following is a 209-amino-acid chain: Cytidylate kinase (209 aa).

Residue Gly7–Ser15 coordinates ATP.

The protein belongs to the cytidylate kinase family. Type 1 subfamily.

Its subcellular location is the cytoplasm. The enzyme catalyses CMP + ATP = CDP + ADP. It catalyses the reaction dCMP + ATP = dCDP + ADP. This Deinococcus geothermalis (strain DSM 11300 / CIP 105573 / AG-3a) protein is Cytidylate kinase.